Consider the following 378-residue polypeptide: tRNA-specific 2-thiouridylase MnmA (378 aa).

ATP-binding positions include 9–16 (GVSGGVDS) and M35. Positions 94-96 (NPD) are interaction with target base in tRNA. C99 functions as the Nucleophile in the catalytic mechanism. C99 and C195 form a disulfide bridge. G123 is an ATP binding site. Residues 145–147 (KDQ) form an interaction with tRNA region. C195 (cysteine persulfide intermediate) is an active-site residue. An interaction with tRNA region spans residues 307 to 308 (RY).

The protein belongs to the MnmA/TRMU family.

Its subcellular location is the cytoplasm. The enzyme catalyses S-sulfanyl-L-cysteinyl-[protein] + uridine(34) in tRNA + AH2 + ATP = 2-thiouridine(34) in tRNA + L-cysteinyl-[protein] + A + AMP + diphosphate + H(+). Functionally, catalyzes the 2-thiolation of uridine at the wobble position (U34) of tRNA, leading to the formation of s(2)U34. The sequence is that of tRNA-specific 2-thiouridylase MnmA from Xanthomonas euvesicatoria pv. vesicatoria (strain 85-10) (Xanthomonas campestris pv. vesicatoria).